Reading from the N-terminus, the 544-residue chain is Chaperonin GroEL (544 aa).

Residues 29 to 32 (TLGP), Lys-50, 86 to 90 (DGTTT), Gly-414, and Asp-494 contribute to the ATP site.

It belongs to the chaperonin (HSP60) family. Forms a cylinder of 14 subunits composed of two heptameric rings stacked back-to-back. Interacts with the co-chaperonin GroES.

Its subcellular location is the cytoplasm. It carries out the reaction ATP + H2O + a folded polypeptide = ADP + phosphate + an unfolded polypeptide.. Together with its co-chaperonin GroES, plays an essential role in assisting protein folding. The GroEL-GroES system forms a nano-cage that allows encapsulation of the non-native substrate proteins and provides a physical environment optimized to promote and accelerate protein folding. The protein is Chaperonin GroEL of Amoebophilus asiaticus (strain 5a2).